A 419-amino-acid polypeptide reads, in one-letter code: tRNA(Ile)-lysidine synthase (419 aa).

Residue 31–36 participates in ATP binding; it reads SGGGDS.

It belongs to the tRNA(Ile)-lysidine synthase family.

The protein resides in the cytoplasm. The catalysed reaction is cytidine(34) in tRNA(Ile2) + L-lysine + ATP = lysidine(34) in tRNA(Ile2) + AMP + diphosphate + H(+). Functionally, ligates lysine onto the cytidine present at position 34 of the AUA codon-specific tRNA(Ile) that contains the anticodon CAU, in an ATP-dependent manner. Cytidine is converted to lysidine, thus changing the amino acid specificity of the tRNA from methionine to isoleucine. This is tRNA(Ile)-lysidine synthase from Ruegeria pomeroyi (strain ATCC 700808 / DSM 15171 / DSS-3) (Silicibacter pomeroyi).